The primary structure comprises 102 residues: Fe-S protein maturation auxiliary factor YitW (102 aa).

Belongs to the MIP18 family.

Functionally, involved in the maturation of iron-sulfur (Fe-S) proteins. May function as a Fe-S cluster carrier. The protein is Fe-S protein maturation auxiliary factor YitW (yitW) of Bacillus subtilis (strain 168).